The chain runs to 882 residues: Exo-beta-D-glucosaminidase ARB_07888 (882 aa).

A signal peptide spans 1–21 (MWFVFRPAAIPALLLTLGVSA). Residues 22 to 31 (LSPLRPLVST) constitute a propeptide that is removed on maturation. Residues N86, N200, N234, N237, N287, and N442 are each glycosylated (N-linked (GlcNAc...) asparagine). The Proton donor role is filled by D466. The Nucleophile role is filled by E538. N-linked (GlcNAc...) asparagine glycosylation is found at N688, N773, and N816.

This sequence belongs to the glycosyl hydrolase 2 family. Monomer.

It is found in the secreted. The enzyme catalyses Hydrolysis of chitosan or chitosan oligosaccharides to remove successive D-glucosamine residues from the non-reducing termini.. In terms of biological role, hydrolyzes chitosan and chitooligosaccharides with retention of anomeric configuration. This is Exo-beta-D-glucosaminidase ARB_07888 from Arthroderma benhamiae (strain ATCC MYA-4681 / CBS 112371) (Trichophyton mentagrophytes).